A 67-amino-acid polypeptide reads, in one-letter code: Alpha-toxin Tf3 (67 aa).

An LCN-type CS-alpha/beta domain is found at 2-63 (KDGYPVEGDN…EPTKTNGRCK (62 aa)). Intrachain disulfides connect C12–C62, C16–C38, C24–C45, and C28–C47. P64 is modified (proline amide).

The protein belongs to the long (4 C-C) scorpion toxin superfamily. Sodium channel inhibitor family. Alpha subfamily. Expressed by the venom gland.

It is found in the secreted. Its function is as follows. Alpha toxins bind voltage-independently at site-3 of sodium channels (Nav) and inhibit the inactivation of the activated channels, thereby blocking neuronal transmission. This chain is Alpha-toxin Tf3, found in Tityus fasciolatus (Central Brazilian scorpion).